The sequence spans 117 residues: Holo-[acyl-carrier-protein] synthase (117 aa).

Mg(2+) is bound by residues Asp-8 and Glu-59.

Belongs to the P-Pant transferase superfamily. AcpS family. Mg(2+) serves as cofactor.

The protein localises to the cytoplasm. The enzyme catalyses apo-[ACP] + CoA = holo-[ACP] + adenosine 3',5'-bisphosphate + H(+). Functionally, transfers the 4'-phosphopantetheine moiety from coenzyme A to a Ser of acyl-carrier-protein. The protein is Holo-[acyl-carrier-protein] synthase of Staphylococcus carnosus (strain TM300).